The sequence spans 413 residues: Serine hydroxymethyltransferase (413 aa).

Residues leucine 119 and 123-125 (GHL) contribute to the (6S)-5,6,7,8-tetrahydrofolate site. Position 228 is an N6-(pyridoxal phosphate)lysine (lysine 228).

The protein belongs to the SHMT family. Homodimer. Pyridoxal 5'-phosphate serves as cofactor.

Its subcellular location is the cytoplasm. The enzyme catalyses (6R)-5,10-methylene-5,6,7,8-tetrahydrofolate + glycine + H2O = (6S)-5,6,7,8-tetrahydrofolate + L-serine. It participates in one-carbon metabolism; tetrahydrofolate interconversion. The protein operates within amino-acid biosynthesis; glycine biosynthesis; glycine from L-serine: step 1/1. Its function is as follows. Catalyzes the reversible interconversion of serine and glycine with tetrahydrofolate (THF) serving as the one-carbon carrier. This reaction serves as the major source of one-carbon groups required for the biosynthesis of purines, thymidylate, methionine, and other important biomolecules. Also exhibits THF-independent aldolase activity toward beta-hydroxyamino acids, producing glycine and aldehydes, via a retro-aldol mechanism. This is Serine hydroxymethyltransferase from Caldanaerobacter subterraneus subsp. tengcongensis (strain DSM 15242 / JCM 11007 / NBRC 100824 / MB4) (Thermoanaerobacter tengcongensis).